A 303-amino-acid polypeptide reads, in one-letter code: Probable porphobilinogen deaminase (303 aa).

Cysteine 233 is modified (S-(dipyrrolylmethanemethyl)cysteine).

It belongs to the HMBS family. The cofactor is dipyrromethane.

It carries out the reaction 4 porphobilinogen + H2O = hydroxymethylbilane + 4 NH4(+). Its pathway is porphyrin-containing compound metabolism; protoporphyrin-IX biosynthesis; coproporphyrinogen-III from 5-aminolevulinate: step 2/4. Tetrapolymerization of the monopyrrole PBG into the hydroxymethylbilane pre-uroporphyrinogen in several discrete steps. This chain is Probable porphobilinogen deaminase, found in Methanocella arvoryzae (strain DSM 22066 / NBRC 105507 / MRE50).